The primary structure comprises 373 residues: Chaperone protein DnaJ (373 aa).

One can recognise a J domain in the interval 5-69 (DYYEVLGVNK…NKRANYDQFG (65 aa)). The CR-type zinc finger occupies 130 to 212 (GTKKEISIKK…CKGKGTENKT (83 aa)). Zn(2+)-binding residues include Cys143, Cys146, Cys160, Cys163, Cys186, Cys189, Cys200, and Cys203. CXXCXGXG motif repeat units follow at residues 143 to 150 (CHTCNGDG), 160 to 167 (CSYCNGAG), 186 to 193 (CPKCEGSG), and 200 to 207 (CPTCKGKG).

Belongs to the DnaJ family. In terms of assembly, homodimer. Requires Zn(2+) as cofactor.

It is found in the cytoplasm. Functionally, participates actively in the response to hyperosmotic and heat shock by preventing the aggregation of stress-denatured proteins and by disaggregating proteins, also in an autonomous, DnaK-independent fashion. Unfolded proteins bind initially to DnaJ; upon interaction with the DnaJ-bound protein, DnaK hydrolyzes its bound ATP, resulting in the formation of a stable complex. GrpE releases ADP from DnaK; ATP binding to DnaK triggers the release of the substrate protein, thus completing the reaction cycle. Several rounds of ATP-dependent interactions between DnaJ, DnaK and GrpE are required for fully efficient folding. Also involved, together with DnaK and GrpE, in the DNA replication of plasmids through activation of initiation proteins. This chain is Chaperone protein DnaJ, found in Staphylococcus epidermidis (strain ATCC 12228 / FDA PCI 1200).